The following is a 509-amino-acid chain: Photosystem II CP47 reaction center protein (509 aa).

6 helical membrane passes run 21–36, 101–115, 140–156, 203–218, 237–252, and 457–472; these read SVHL…WAGS, IVLS…VWHW, GIHL…FGAF, IAAG…FHLT, VLSS…AFVV, and VFAL…HGAR.

The protein belongs to the PsbB/PsbC family. PsbB subfamily. PSII is composed of 1 copy each of membrane proteins PsbA, PsbB, PsbC, PsbD, PsbE, PsbF, PsbH, PsbI, PsbJ, PsbK, PsbL, PsbM, PsbT, PsbX, PsbY, PsbZ, Psb30/Ycf12, peripheral proteins PsbO, CyanoQ (PsbQ), PsbU, PsbV and a large number of cofactors. It forms dimeric complexes. Requires Binds multiple chlorophylls. PSII binds additional chlorophylls, carotenoids and specific lipids. as cofactor.

The protein localises to the cellular thylakoid membrane. Its function is as follows. One of the components of the core complex of photosystem II (PSII). It binds chlorophyll and helps catalyze the primary light-induced photochemical processes of PSII. PSII is a light-driven water:plastoquinone oxidoreductase, using light energy to abstract electrons from H(2)O, generating O(2) and a proton gradient subsequently used for ATP formation. The sequence is that of Photosystem II CP47 reaction center protein from Nostoc sp. (strain PCC 7120 / SAG 25.82 / UTEX 2576).